An 84-amino-acid chain; its full sequence is Toxin To5 (84 aa).

The first 19 residues, 1–19, serve as a signal peptide directing secretion; sequence MKAIIFFIGCLMLIDLVAG. One can recognise an LCN-type CS-alpha/beta domain in the interval 21–82; sequence RSGYPVTQKG…IWGSYPNNCG (62 aa). 4 disulfides stabilise this stretch: Cys-31/Cys-81, Cys-35/Cys-57, Cys-43/Cys-62, and Cys-47/Cys-64. Cys-81 is modified (cysteine amide).

As to expression, expressed by the venom gland.

The protein localises to the secreted. Its function is as follows. Beta toxins bind voltage-independently at site-4 of sodium channels (Nav) and shift the voltage of activation toward more negative potentials thereby affecting sodium channel activation and promoting spontaneous and repetitive firing. The chain is Toxin To5 from Tityus obscurus (Amazonian scorpion).